Consider the following 165-residue polypeptide: Large ribosomal subunit protein uL10 (165 aa).

This sequence belongs to the universal ribosomal protein uL10 family. As to quaternary structure, part of the ribosomal stalk of the 50S ribosomal subunit. The N-terminus interacts with L11 and the large rRNA to form the base of the stalk. The C-terminus forms an elongated spine to which L12 dimers bind in a sequential fashion forming a multimeric L10(L12)X complex.

Forms part of the ribosomal stalk, playing a central role in the interaction of the ribosome with GTP-bound translation factors. The sequence is that of Large ribosomal subunit protein uL10 from Borrelia turicatae (strain 91E135).